The primary structure comprises 116 residues: MDKKTSRLRRAIRARKKIQELGVNRLVVHRTPRHIYAQVINPEAQVVAAASTVEKAVKEQLKSTGNVDAAKAVGKFVAERAIEKGVTNVAFDRSGFKYHGRVAALADAAREAGLQF.

It belongs to the universal ribosomal protein uL18 family. Part of the 50S ribosomal subunit; part of the 5S rRNA/L5/L18/L25 subcomplex. Contacts the 5S and 23S rRNAs.

This is one of the proteins that bind and probably mediate the attachment of the 5S RNA into the large ribosomal subunit, where it forms part of the central protuberance. The sequence is that of Large ribosomal subunit protein uL18 from Shewanella oneidensis (strain ATCC 700550 / JCM 31522 / CIP 106686 / LMG 19005 / NCIMB 14063 / MR-1).